A 260-amino-acid chain; its full sequence is Acyl-coenzyme A diphosphatase FITM2 (260 aa).

Topologically, residues 1–23 (MERLENCAQMFQRRFLNESFRRH) are cytoplasmic. Residues 24–44 (CPVLLACIVLGGSLLKELCPL) form a helical membrane-spanning segment. At 45–57 (PDSYWNNKRNVLN) the chain is on the lumenal side. The helical transmembrane segment at 58 to 78 (VYFVKFSWGWTLWLLLPFIAL) threads the bilayer. Residues 79–93 (TNYKLTRSTTKVLRR) lie on the Cytoplasmic side of the membrane. The helical transmembrane segment at 94 to 114 (LSSLLVSTLIWYLCTNLFLYI) threads the bilayer. Residues 115-145 (ENITGSCYESEAMSDPKEHQDRRECRLHSGY) are Lumenal-facing. Residues 146 to 166 (WHGFDISGHCFLLSYCILLIL) form a helical membrane-spanning segment. His-154 is a catalytic residue. The Cytoplasmic segment spans residues 167 to 189 (EETSIISNIRFERHWHRMAINAQ). The next 2 helical transmembrane spans lie at 190–210 (FAALSILVIIWVWMFLCTAVY) and 211–231 (FHNIFQKVIGTAFGILAWYIT). His-212 is an active-site residue. Topologically, residues 232 to 260 (YRWWYLQPISPGLPPASASRSGKEPIYRN) are cytoplasmic.

The protein belongs to the FIT family. FIT2 subfamily.

It localises to the endoplasmic reticulum membrane. The enzyme catalyses an acyl-CoA + H2O = an acyl-4'-phosphopantetheine + adenosine 3',5'-bisphosphate + 2 H(+). Its function is as follows. Fatty acyl-coenzyme A (CoA) diphosphatase that hydrolyzes fatty acyl-CoA to yield acyl-4'-phosphopantetheine and adenosine 3',5'-bisphosphate. Preferentially hydrolyzes unsaturated long-chain acyl-CoA substrates in the endoplasmic reticulum (ER) lumen. This catalytic activity is required for maintaining ER structure and for lipid droplets (LDs) biogenesis, which are lipid storage organelles involved in maintaining lipid and energy homeostasis. May directly bind to diacylglycerol (DAGs) and triacylglycerol, which is also important for LD biogenesis. May support directional budding of nacent LDs from the ER into the cytosol by reducing DAG levels at sites of LD formation. May play a role in the regulation of cell morphology, ER morphology and cytoskeletal organization. The chain is Acyl-coenzyme A diphosphatase FITM2 from Xenopus tropicalis (Western clawed frog).